The primary structure comprises 230 residues: Ureidoacrylate amidohydrolase RutB (230 aa).

D24 serves as the catalytic Proton acceptor. K133 is an active-site residue. The active-site Nucleophile is C166.

Belongs to the isochorismatase family. RutB subfamily.

The catalysed reaction is (Z)-3-ureidoacrylate + H2O + H(+) = (Z)-3-aminoacrylate + NH4(+) + CO2. It carries out the reaction (Z)-3-ureidoacrylate + H2O = (Z)-3-aminoacrylate + carbamate + H(+). The enzyme catalyses (Z)-2-methylureidoacrylate + H2O + H(+) = (Z)-2-methylaminoacrylate + NH4(+) + CO2. In terms of biological role, hydrolyzes ureidoacrylate to form aminoacrylate and carbamate. The carbamate hydrolyzes spontaneously, thereby releasing one of the nitrogen atoms of the pyrimidine ring as ammonia and one of its carbon atoms as CO2. The protein is Ureidoacrylate amidohydrolase RutB of Escherichia coli O127:H6 (strain E2348/69 / EPEC).